Consider the following 361-residue polypeptide: Actin maturation protease (361 aa).

Residues 1–75 (MTSPCSFPLK…PPPPPLPSAV (75 aa)) are disordered. Composition is skewed to pro residues over residues 24–33 (NIPPPLPLNP) and 52–72 (PLPPPPPPPAPPPPPPPPPLP). A peptidase C39-like region spans residues 134-254 (SCIQEGPQCG…WAVSAGVLIG (121 aa)). Cysteine 142 is a catalytic residue.

It belongs to the ACTMAP family. Interacts (via N-terminus) with PFN2 isoforms 1/IIa and 2/IIb; the interactions may facilitate efficient cleavage of the acetylated N-terminus of immature actin. Interacts with PFN1.

It localises to the cytoplasm. The catalysed reaction is N-terminal N(alpha)-acetyl-L-methionyl-L-aspartyl-[protein] + H2O = N-terminal L-aspartyl-[protein] + N-acetyl-L-methionine. It carries out the reaction N-terminal N(alpha)-acetyl-L-methionyl-L-glutamyl-[protein] + H2O = N-terminal L-glutamyl-[protein] + N-acetyl-L-methionine. It catalyses the reaction N-terminal N(alpha)-acetyl-L-cysteinyl-L-aspartyl-[protein] + H2O = N-terminal L-aspartyl-[protein] + N-acetyl-L-cysteine. The enzyme catalyses N-terminal N(alpha)-acetyl-L-cysteinyl-L-glutamyl-[protein] + H2O = N-terminal L-glutamyl-[protein] + N-acetyl-L-cysteine. Functionally, actin maturation protease that specifically mediates the cleavage of immature acetylated N-terminal actin, thereby contributing to actin maturation. Cleaves N-terminal acetylated methionine of immature cytoplasmic beta- and gamma-actins Actb and Actg1 after translation. Cleaves N-terminal acetylated cysteine of muscle alpha-actins Acta1, Actc1 and Acta2 after canonical removal of N-terminal methionine. This chain is Actin maturation protease, found in Mus musculus (Mouse).